A 48-amino-acid polypeptide reads, in one-letter code: Large ribosomal subunit protein bL33B (48 aa).

Belongs to the bacterial ribosomal protein bL33 family.

The sequence is that of Large ribosomal subunit protein bL33B from Streptococcus thermophilus (strain CNRZ 1066).